The following is a 198-amino-acid chain: Chromophore lyase CpcS/CpeS 2 (198 aa).

Belongs to the CpcS/CpeS biliprotein lyase family.

The protein localises to the plastid. The protein resides in the organellar chromatophore. Covalently attaches a chromophore to Cys residue(s) of phycobiliproteins. In Paulinella chromatophora, this protein is Chromophore lyase CpcS/CpeS 2.